The following is a 298-amino-acid chain: ADP-ribosylation factor GTPase-activating protein effector protein 2 (298 aa).

N-acetylserine is present on S2. The 123-residue stretch at 8 to 130 (KKALSALLRD…KWIGDLSSIE (123 aa)) folds into the Arf-GAP domain. A C4-type zinc finger spans residues 23-47 (CADCKAQLHPRWASWSLGVFICIKC). Residues 137–180 (EPVLHKPSANHSLPASNARLDQSSNSLQKTQTQPPSHLLSTSRS) are disordered. Polar residues predominate over residues 145-171 (ANHSLPASNARLDQSSNSLQKTQTQPP). A phosphoserine mark is found at S180, S183, and S207.

The protein localises to the cytoplasm. Its subcellular location is the golgi apparatus. Functionally, GTPase-activating protein for the ADP ribosylation factor family. The protein is ADP-ribosylation factor GTPase-activating protein effector protein 2 (AGE2) of Saccharomyces cerevisiae (strain ATCC 204508 / S288c) (Baker's yeast).